We begin with the raw amino-acid sequence, 67 residues long: Large ribosomal subunit protein uL29 (67 aa).

This sequence belongs to the universal ribosomal protein uL29 family.

This is Large ribosomal subunit protein uL29 from Sorangium cellulosum (strain So ce56) (Polyangium cellulosum (strain So ce56)).